The chain runs to 534 residues: Probable protein kinase UbiB (534 aa).

Residues 23-43 (DLLFDLPLPWFLLALRYVLPW) traverse the membrane as a helical segment. The Protein kinase domain maps to 125 to 492 (RFDVEPLASA…WKKRKDDWFL (368 aa)). ATP contacts are provided by residues 131-139 (LASASVAQV) and lysine 153. The active-site Proton acceptor is aspartate 288. The next 2 membrane-spanning stretches (helical) occupy residues 490 to 510 (WFLR…AAGG) and 512 to 532 (LHEL…YLVV).

This sequence belongs to the ABC1 family. UbiB subfamily.

The protein resides in the cell inner membrane. It participates in cofactor biosynthesis; ubiquinone biosynthesis [regulation]. Functionally, is probably a protein kinase regulator of UbiI activity which is involved in aerobic coenzyme Q (ubiquinone) biosynthesis. This chain is Probable protein kinase UbiB, found in Pseudomonas fluorescens (strain Pf0-1).